Here is a 299-residue protein sequence, read N- to C-terminus: MLSAGLGLLMLVAVVEFLIGLIGNGVLVVWSFREWMRKFNWSSYNLIILGLAGCRFLLQWLIILDLSLFPLFQSSRWLRYLSIFWVLVSQASLWFATFLSVFYCKKITTFDRPAYLWLKQRAYNLSLWCLLGYFIINLLLTVQIGLMFYHPPQGNSSIRYPFESWQYLYAFRLNSGSYLPLMVFLVSSGMLIVSLYTHHKKMKVHSAGRRDVRAKAHITALKSLGCFLFLHLVYIMASPFSITSKTYPPDLTSVFIWETLMAAYPSLHSLILIMGIPRVKQTCQKILWKTVCARRCWGP.

Position 1 (Met1) is a topological domain, extracellular. A helical transmembrane segment spans residues 2–22; that stretch reads LSAGLGLLMLVAVVEFLIGLI. Residues 23–45 are Cytoplasmic-facing; that stretch reads GNGVLVVWSFREWMRKFNWSSYN. A helical membrane pass occupies residues 46–66; that stretch reads LIILGLAGCRFLLQWLIILDL. The Extracellular portion of the chain corresponds to 67–82; sequence SLFPLFQSSRWLRYLS. A helical membrane pass occupies residues 83–103; the sequence is IFWVLVSQASLWFATFLSVFY. Residues 104–127 lie on the Cytoplasmic side of the membrane; that stretch reads CKKITTFDRPAYLWLKQRAYNLSL. A helical membrane pass occupies residues 128–148; it reads WCLLGYFIINLLLTVQIGLMF. The Extracellular segment spans residues 149–175; that stretch reads YHPPQGNSSIRYPFESWQYLYAFRLNS. Asn155 carries an N-linked (GlcNAc...) asparagine glycan. The helical transmembrane segment at 176–196 threads the bilayer; sequence GSYLPLMVFLVSSGMLIVSLY. Topologically, residues 197–223 are cytoplasmic; sequence THHKKMKVHSAGRRDVRAKAHITALKS. A helical membrane pass occupies residues 224–244; it reads LGCFLFLHLVYIMASPFSITS. At 245 to 253 the chain is on the extracellular side; sequence KTYPPDLTS. A helical transmembrane segment spans residues 254–274; it reads VFIWETLMAAYPSLHSLILIM. Residues 275–299 are Cytoplasmic-facing; sequence GIPRVKQTCQKILWKTVCARRCWGP.

Belongs to the G-protein coupled receptor T2R family.

The protein resides in the membrane. Functionally, receptor that may play a role in the perception of bitterness and is gustducin-linked. May play a role in sensing the chemical composition of the gastrointestinal content. The activity of this receptor may stimulate alpha gustducin, mediate PLC-beta-2 activation and lead to the gating of TRPM5. In Gorilla gorilla gorilla (Western lowland gorilla), this protein is Taste receptor type 2 member 5 (TAS2R5).